The primary structure comprises 504 residues: Deoxyguanosinetriphosphate triphosphohydrolase (504 aa).

The 208-residue stretch at 66 to 273 (RLTHSLEVQQ…MEAADDISYC (208 aa)) folds into the HD domain.

This sequence belongs to the dGTPase family. Type 1 subfamily. In terms of assembly, homotetramer. It depends on Mg(2+) as a cofactor.

The enzyme catalyses dGTP + H2O = 2'-deoxyguanosine + triphosphate + H(+). DGTPase preferentially hydrolyzes dGTP over the other canonical NTPs. In Klebsiella pneumoniae (strain 342), this protein is Deoxyguanosinetriphosphate triphosphohydrolase.